The primary structure comprises 320 residues: MQTRNTFSWIKEEITRSISVSLMIYIITGASISNAYPIFAQQGYENPREATGRIVCANCHLANKPVDIEVPQAVLPDTVFEAVVRIPYDMQLKQVLANGKKGALNVGAVLILPEGFELAPPDRISPEMKEKIGNLSFQNYRPTKKNILVIGPVPGKKYSEITFPILSPDPASNKDAHFLKYPIYVGGNRGRGQIYPDGNKSNNTVYNATATGIISKIIRKEKGGYEITITDALDGHQVVDIIPPGPELLVSEGESIKLDQPLTINPNVGGFGQGDAEIVLQDPLRVQGLLFFLASIVFAQIFLVLKKKQFEKVQVSEMNF.

Residues 1–35 (MQTRNTFSWIKEEITRSISVSLMIYIITGASISNA) form the signal peptide. Residues Tyr-36, Cys-56, Cys-59, and His-60 each coordinate heme. The helical transmembrane segment at 286–306 (VQGLLFFLASIVFAQIFLVLK) threads the bilayer.

It belongs to the cytochrome f family. The 4 large subunits of the cytochrome b6-f complex are cytochrome b6, subunit IV (17 kDa polypeptide, petD), cytochrome f and the Rieske protein, while the 4 small subunits are PetG, PetL, PetM and PetN. The complex functions as a dimer. Requires heme as cofactor.

It localises to the plastid. It is found in the chloroplast thylakoid membrane. Its function is as follows. Component of the cytochrome b6-f complex, which mediates electron transfer between photosystem II (PSII) and photosystem I (PSI), cyclic electron flow around PSI, and state transitions. This is Cytochrome f from Gossypium barbadense (Sea Island cotton).